The sequence spans 184 residues: UPF0301 protein ABSDF3201 (184 aa).

The protein belongs to the UPF0301 (AlgH) family.

The sequence is that of UPF0301 protein ABSDF3201 from Acinetobacter baumannii (strain SDF).